The following is a 128-amino-acid chain: Large ribosomal subunit protein bL20c (128 aa).

The protein belongs to the bacterial ribosomal protein bL20 family.

The protein resides in the plastid. It is found in the chloroplast. Its function is as follows. Binds directly to 23S ribosomal RNA and is necessary for the in vitro assembly process of the 50S ribosomal subunit. It is not involved in the protein synthesizing functions of that subunit. In Daucus carota (Wild carrot), this protein is Large ribosomal subunit protein bL20c.